Reading from the N-terminus, the 355-residue chain is Oligopeptide transport ATP-binding protein AmiE (355 aa).

Positions 9 to 260 constitute an ABC transporter domain; the sequence is LTARDIVVEF…PRHPYTWSLL (252 aa). 45 to 52 provides a ligand contact to ATP; sequence GESGSGKS.

It belongs to the ABC transporter superfamily.

The protein resides in the cell membrane. In terms of biological role, part of the binding-protein-dependent transport system for oligopeptides. Probably responsible for energy coupling to the transport system. This Streptococcus pneumoniae serotype 4 (strain ATCC BAA-334 / TIGR4) protein is Oligopeptide transport ATP-binding protein AmiE (amiE).